We begin with the raw amino-acid sequence, 661 residues long: SUMO-activating enzyme subunit 2 (661 aa).

Residues 29 to 34 (GAGGIG), Asp-53, 61 to 64 (NLNR), Lys-77, and 122 to 127 (DNISAR) contribute to the ATP site. Residues Cys-163 and Cys-166 each coordinate Zn(2+). Cys-178 acts as the Glycyl thioester intermediate in catalysis. The Zn(2+) site is built by Cys-436 and Cys-439. The segment at 545 to 661 (KKQQQKEKDQ…SKKLKSNLQD (117 aa)) is disordered. Residues 548–563 (QQKEKDQKEGKTTTIE) are compositionally biased toward basic and acidic residues. Low complexity-rich tracts occupy residues 577 to 607 (TSQTTTTTTTTTTTTESDNNSNNNKNNNNNN) and 623 to 634 (SSTTTSSATPSI).

Belongs to the ubiquitin-activating E1 family. Heterodimer of sae1 and sae2. The complex binds sumo via sae2.

The protein localises to the nucleus. It functions in the pathway protein modification; protein sumoylation. Functionally, the dimeric enzyme acts as an E1 ligase for sumo. It mediates ATP-dependent activation of sumo and formation of a thioester with a conserved cysteine residue on sae2. The sequence is that of SUMO-activating enzyme subunit 2 (uba2) from Dictyostelium discoideum (Social amoeba).